A 600-amino-acid polypeptide reads, in one-letter code: UvrABC system protein C (600 aa).

The GIY-YIG domain maps to 16–94; it reads EKPGCYQYFD…IKEYQPRYNV (79 aa). A UVR domain is found at 208-243; that stretch reads HRLVRMYRDRMQAYSEELRFEEAQICKERIELLERY.

This sequence belongs to the UvrC family. Interacts with UvrB in an incision complex.

Its subcellular location is the cytoplasm. Its function is as follows. The UvrABC repair system catalyzes the recognition and processing of DNA lesions. UvrC both incises the 5' and 3' sides of the lesion. The N-terminal half is responsible for the 3' incision and the C-terminal half is responsible for the 5' incision. The chain is UvrABC system protein C from Porphyromonas gingivalis (strain ATCC 33277 / DSM 20709 / CIP 103683 / JCM 12257 / NCTC 11834 / 2561).